The following is a 238-amino-acid chain: Orotidine 5'-phosphate decarboxylase (238 aa).

Substrate is bound by residues aspartate 18, lysine 40, 67 to 76 (DMKLLDIDNT), threonine 122, arginine 183, glutamine 192, and arginine 213. Lysine 69 (proton donor) is an active-site residue.

This sequence belongs to the OMP decarboxylase family. Type 1 subfamily. Homodimer.

It catalyses the reaction orotidine 5'-phosphate + H(+) = UMP + CO2. It participates in pyrimidine metabolism; UMP biosynthesis via de novo pathway; UMP from orotate: step 2/2. In terms of biological role, catalyzes the decarboxylation of orotidine 5'-monophosphate (OMP) to uridine 5'-monophosphate (UMP). The polypeptide is Orotidine 5'-phosphate decarboxylase (Brucella canis (strain ATCC 23365 / NCTC 10854 / RM-666)).